Consider the following 218-residue polypeptide: UPF0329 protein ECU10_1860 (218 aa).

This sequence belongs to the UPF0329 family.

This chain is UPF0329 protein ECU10_1860, found in Encephalitozoon cuniculi (strain GB-M1) (Microsporidian parasite).